Reading from the N-terminus, the 505-residue chain is Deoxyguanosinetriphosphate triphosphohydrolase (505 aa).

One can recognise an HD domain in the interval 66–273 (RLTHSMEVQQ…MEAADDISYC (208 aa)).

This sequence belongs to the dGTPase family. Type 1 subfamily. As to quaternary structure, homotetramer. The cofactor is Mg(2+).

The catalysed reaction is dGTP + H2O = 2'-deoxyguanosine + triphosphate + H(+). With respect to regulation, inhibited by the action of reducing agents such as dithiothreitol and 2-mercaptoethanol. Functionally, dGTPase preferentially hydrolyzes dGTP over the other canonical NTPs. The sequence is that of Deoxyguanosinetriphosphate triphosphohydrolase from Shigella boydii.